A 549-amino-acid chain; its full sequence is Undecaprenyl phosphate-alpha-4-amino-4-deoxy-L-arabinose arabinosyl transferase 1 (549 aa).

The next 12 helical transmembrane spans lie at 9–29 (LLLIAFGLFYLLPLATHGLWI), 80–102 (LFGVRVASALSTGLSVVLAYLLA), 112–132 (SLASALLYMSFTVVALQAGYA), 133–153 (NLDPQFTFWVNLSLVALWFTF), 176–196 (FMTKGFLAWLLPVLVALPYAI), 204–224 (LLIYGGIGVLVAILISLPWAL), 257–277 (WWYYLPLLVGFSVPWVLLLPA), 290–310 (SSGFLLLWLVLPLAFFSLSKG), 312–332 (LPAYILPCLLPLALLMGNTLV), 342–362 (LLAFNGVLNLVAGLLGLLALV), 377–397 (HLVLVYVLLLGWILSNLLQAM), and 402–422 (LWAAPALGSFLLVALAPAALP).

It belongs to the glycosyltransferase 83 family.

It is found in the cell inner membrane. It catalyses the reaction 4-amino-4-deoxy-alpha-L-arabinopyranosyl di-trans,octa-cis-undecaprenyl phosphate + lipid IVA = lipid IIA + di-trans,octa-cis-undecaprenyl phosphate.. It participates in lipopolysaccharide metabolism; 4-amino-4-deoxy-beta-L-arabinose-lipid A biosynthesis. Functionally, catalyzes the transfer of the L-Ara4N moiety of the glycolipid undecaprenyl phosphate-alpha-L-Ara4N to lipid A. The modified arabinose is attached to lipid A and is required for resistance to polymyxin and cationic antimicrobial peptides. In Pseudomonas fluorescens (strain ATCC BAA-477 / NRRL B-23932 / Pf-5), this protein is Undecaprenyl phosphate-alpha-4-amino-4-deoxy-L-arabinose arabinosyl transferase 1.